Consider the following 323-residue polypeptide: Aquaporin-4 (323 aa).

At 1–36 (MSDGAAARRWGKCGHSCSRESIMVAFKGVWTQAFWK) the chain is on the cytoplasmic side. S-palmitoyl cysteine attachment occurs at residues cysteine 13 and cysteine 17. Residues 37–57 (AVSAEFLATLIFVLLGVGSTI) traverse the membrane as a helical segment. Over 58 to 69 (NWGGSENPLPVD) the chain is Extracellular. The helical transmembrane segment at 70–89 (MVLISLCFGLSIATMVQCFG) threads the bilayer. At 90–93 (HISG) the chain is on the cytoplasmic side. The segment at residues 94-101 (GHINPAVT) is an intramembrane region (discontinuously helical). The NPA 1 motif lies at 97 to 99 (NPA). Residues 102–115 (VAMVCTRKISIAKS) are Cytoplasmic-facing. Serine 111 is subject to Phosphoserine; by PKG. The chain crosses the membrane as a helical span at residues 116 to 136 (VFYIIAQCLGAIIGAGILYLV). The Extracellular portion of the chain corresponds to 137-155 (TPPSVVGGLGVTTVHGNLT). Asparagine 153 carries N-linked (GlcNAc...) asparagine glycosylation. The helical transmembrane segment at 156–176 (AGHGLLVELIITFQLVFTIFA) threads the bilayer. Residues 177–184 (SCDSKRTD) lie on the Cytoplasmic side of the membrane. At serine 180 the chain carries Phosphoserine; by PKC. Residues 185–205 (VTGSIALAIGFSVAIGHLFAI) traverse the membrane as a helical segment. Asparagine 206 is a glycosylation site (N-linked (GlcNAc...) asparagine). Residues 206-208 (NYT) are Extracellular-facing. Residues 209 to 222 (GASMNPARSFGPAV) constitute an intramembrane region (discontinuously helical). The NPA 2 signature appears at 213-215 (NPA). At 223–231 (IMGNWANHW) the chain is on the extracellular side. The helical transmembrane segment at 232 to 252 (IYWVGPIMGAVLAGALYEYVF) threads the bilayer. Over 253–323 (CPDVELKRRL…DSSGEVLSSV (71 aa)) the chain is Cytoplasmic. 2 positions are modified to phosphoserine: serine 276 and serine 285. A Phosphothreonine modification is found at threonine 289. A Phosphoserine modification is found at serine 321.

It belongs to the MIP/aquaporin (TC 1.A.8) family. In terms of assembly, homotetramer. The tetramers can form oligomeric arrays in membranes. The size of the oligomers differs between tissues and is smaller in skeletal muscle than in brain. Interaction between AQP4 oligomeric arrays in close-by cells can contribute to cell-cell adhesion. Part of a complex containing MLC1, TRPV4, HEPACAM and ATP1B1. Phosphorylation by PKC at Ser-180 reduces conductance by 50%. Phosphorylation by PKG at Ser-111 in response to glutamate increases conductance by 40%; this increase is not due to increased presence at the cell membrane. In terms of processing, isoform 2: Palmitoylated on its N-terminal region. Isoform 1: Not palmitoylated. Detected in brain cortex, especially around cortical blood vessels, and subjacent to pia, with lower levels in parenchymal membranes. Detected in ependymal and astroglial cells in brain. Detected in supporting Hensen's cells, inner sulcus cells and Claudius cells in the inner ear. Detected in skeletal muscle. Detected in gastric parietal cells. Detected in principal cells in collecting ducts in kidney medulla (at protein level). Detected in brain, heart and skeletal muscle.

The protein resides in the cell membrane. The protein localises to the basolateral cell membrane. It is found in the endosome membrane. Its subcellular location is the sarcolemma. It localises to the cell projection. It catalyses the reaction H2O(in) = H2O(out). Its function is as follows. Forms a water-specific channel. Plays an important role in brain water homeostasis and in glymphatic solute transport. Required for a normal rate of water exchange across the blood brain interface. Required for normal levels of cerebrospinal fluid influx into the brain cortex and parenchyma along paravascular spaces that surround penetrating arteries, and for normal drainage of interstitial fluid along paravenous drainage pathways. Thereby, it is required for normal clearance of solutes from the brain interstitial fluid, including soluble beta-amyloid peptides derived from APP. Plays a redundant role in urinary water homeostasis and urinary concentrating ability. The sequence is that of Aquaporin-4 (Aqp4) from Mus musculus (Mouse).